A 707-amino-acid chain; its full sequence is Terpene cyclase/mutase atnI (707 aa).

A compositionally biased stretch (polar residues) spans 1–20; the sequence is MGQHIASSESSTNGHVSLET. The disordered stretch occupies residues 1-22; that stretch reads MGQHIASSESSTNGHVSLETNG. PFTB repeat units follow at residues 130 to 173, 494 to 535, 571 to 608, and 620 to 661; these read AVEI…RLLG, LRDA…VGKT, TAQG…ETLA, and SRRG…VQTA.

This sequence belongs to the terpene cyclase/mutase family.

It participates in secondary metabolite biosynthesis; terpenoid biosynthesis. Its function is as follows. Terpene cyclase/mutase; part of the gene cluster that mediates the biosynthesis of the meroterpenoids arthripenoids. The pathway begins with the HR-PKS atnH that catalyzes two chain-extension steps to form a reduced triketide, which then primes the SAT domain in the NR-PKS atnG to initiate three more cycles of extension to give a linear hexaketide corresponding to the polyketide part of arthripenoids. The FAD-dependent monooxygenase atnJ then performs an oxidative decarboxylation at C11 of the atnH/atnG product, via an electrophilic aromatic hydroxylation with concomitant ipso-decarboxylation. The membrane-bound polyprenyl transferase atnF then introduces a farnesyl group before the FAD-dependent monooxygenase atnK functions as the first epoxidase on terminal C12'-C13' olefin, followed by a second epoxidation on C7'-C8' catalyzed by atnA. The terpene cyclase/mutase atnI then initiates the sequential tricyclic ring formation through protonation of the terminal epoxide and catalyzes the regioselective and stereoselective 6/6/6-tricyclic ring formation. The cytochrome P450 monooxygenase atnM is responsible for hydroxylating both C1' and C10'. The next steps may involve ketoreduction and acetyl transfer by the ketoreductase atnB and the acetyltransferase atnC, and lead to the production of arthripenoid B, the final biosynthetic product of the atn cluster. The hydroquinone moiety in arthripenoid B is prone to undergo spontaneous oxidation to afford a benzoquinone compound, a key intermediate for generating structure diversity. For instance, addition of a cysteine followed by ring contraction gives arthripenoid A, tautomerization gives the main product arthripenoid C, addition of a molecular of water or amine affords arthripenoid D or E, respectively, and loss of one water forms arthripenoid F. In Arthrinium sp, this protein is Terpene cyclase/mutase atnI.